The chain runs to 486 residues: NADH-quinone oxidoreductase subunit N (486 aa).

The next 14 membrane-spanning stretches (helical) occupy residues 14-34, 45-65, 77-97, 105-125, 130-150, 163-183, 203-223, 237-257, 268-288, 299-319, 326-346, 377-397, 409-429, and 459-479; these read SIAP…LNFI, MLAI…SGIV, FAFI…PLTL, CSLA…EFMV, LIVI…LIAL, YFTM…IFYL, ILIA…LSLI, SEVM…IVAM, IAFI…LANI, MLAF…VIGT, LFLY…VLWF, FLMA…VFWG, GFIF…YYYL, and FIIT…KFWT.

This sequence belongs to the complex I subunit 2 family. In terms of assembly, NDH-1 is composed of 14 different subunits. Subunits NuoA, H, J, K, L, M, N constitute the membrane sector of the complex.

It localises to the cell inner membrane. It catalyses the reaction a quinone + NADH + 5 H(+)(in) = a quinol + NAD(+) + 4 H(+)(out). In terms of biological role, NDH-1 shuttles electrons from NADH, via FMN and iron-sulfur (Fe-S) centers, to quinones in the respiratory chain. The immediate electron acceptor for the enzyme in this species is believed to be ubiquinone. Couples the redox reaction to proton translocation (for every two electrons transferred, four hydrogen ions are translocated across the cytoplasmic membrane), and thus conserves the redox energy in a proton gradient. The protein is NADH-quinone oxidoreductase subunit N of Campylobacter hominis (strain ATCC BAA-381 / DSM 21671 / CCUG 45161 / LMG 19568 / NCTC 13146 / CH001A).